Here is a 4841-residue protein sequence, read N- to C-terminus: Nonribosomal peptide synthetase 2 (4841 aa).

The tract at residues 26 to 429 is adenylation 1; the sequence is VKPPNQNVAL…GRLSDGQVKL (404 aa). The region spanning 531-604 is the Carrier 1 domain; the sequence is EPVDEFESSL…DIIFAARRQI (74 aa). Ser565 carries the O-(pantetheine 4'-phosphoryl)serine modification. The condensation 1 stretch occupies residues 640 to 1042; the sequence is EEIIPCTPLQ…ILERPTQEIK (403 aa). The tract at residues 1072–1463 is adenylation 2; the sequence is FEDVVRKHPE…GRIDDQVKLR (392 aa). The 79-residue stretch at 1587 to 1665 folds into the Carrier 2 domain; that stretch reads EGDWSRMDLV…QLAKHLEGKP (79 aa). Ser1625 carries the post-translational modification O-(pantetheine 4'-phosphoryl)serine. Residues 1702–2043 are condensation 2; sequence ILPCTPLQEA…QTVWELEADS (342 aa). In terms of domain architecture, Carrier 3 spans 2139–2212; sequence SEVELDVRQV…KIAAKLLENR (74 aa). Ser2173 carries the O-(pantetheine 4'-phosphoryl)serine modification. The interval 2248 to 2663 is condensation 3; the sequence is AVLPCTPLQS…NHLATEDEAF (416 aa). Residues 2695–3090 are adenylation 3; it reads AAVHPNKLAL…GRADDQVKLR (396 aa). The 75-residue stretch at 3219–3293 folds into the Carrier 4 domain; sequence QDILVLLYDA…DLANCLAKAA (75 aa). Ser3253 is subject to O-(pantetheine 4'-phosphoryl)serine. Positions 3333 to 3735 are condensation 4; the sequence is IAPCSPLQEG…DLAAESPQSE (403 aa). The 80-residue stretch at 3759-3838 folds into the Carrier 5 domain; that stretch reads QNSFEWTSEA…KMITELASIT (80 aa). Ser3799 carries the O-(pantetheine 4'-phosphoryl)serine modification. A condensation 5 region spans residues 3873–4242; that stretch reads SVLPPTHLQE…VEAEAVSDSL (370 aa). Residues 4318–4394 enclose the Carrier 6 domain; it reads IEWNQNEIGI…EMAQKADTKL (77 aa). Ser4355 bears the O-(pantetheine 4'-phosphoryl)serine mark. The segment at 4430–4726 is condensation 6; it reads EVLPALPMQV…DIHLITSESR (297 aa).

It belongs to the NRP synthetase family.

It functions in the pathway siderophore biosynthesis. Nonribosomal peptide synthetase; part of the gene cluster that mediates the biosynthesis of hydroxamate-containing siderophores that play a critical role in virulence. Gibberella zeae produces extracellular coprogen-type siderophores as well as the intracellular siderophore ferricrocin. The role of extracellular siderophores is to supply iron to the fungus during plant infection, and the intracellular ferricrocin is required for intracellular iron distribution and storage with a crucial role in ascus and ascospore development. SID1 catalyzes the conversion of L-ornithine to N(5)-hydroxyornithine, the first step in the biosynthesis of all hydroxamate-containing siderophores. The assembly of extracellular coprogen-type siderophores is performed by the nonribosomal peptide synthetase (NRPS) NPS6 whereas the intracellular siderophore ferricrocin is assembled by NPS2. This chain is Nonribosomal peptide synthetase 2, found in Gibberella zeae (strain ATCC MYA-4620 / CBS 123657 / FGSC 9075 / NRRL 31084 / PH-1) (Wheat head blight fungus).